A 465-amino-acid chain; its full sequence is Phosphatidate cytidylyltransferase (465 aa).

A disordered region spans residues 1-60 (MSDQPPAENADVRQRRAPESPVTERLRAPARDDARPTSDESDMEGILQDEDSDAGSKNKE). Basic and acidic residues predominate over residues 10 to 38 (ADVRQRRAPESPVTERLRAPARDDARPTS). Over residues 39 to 53 (DESDMEGILQDEDSD) the composition is skewed to acidic residues. 8 helical membrane passes run 95-117 (WVVR…TRGA), 121-143 (MFLV…LAVY), 158-178 (FLLT…WGIV), 187-207 (FLVA…FVSF), 214-234 (GYYM…LLIV), 239-259 (FIIQ…AMII), 288-308 (GFIG…LALY), and 367-387 (IALS…ASGF).

It belongs to the CDS family.

Its subcellular location is the membrane. The catalysed reaction is a 1,2-diacyl-sn-glycero-3-phosphate + CTP + H(+) = a CDP-1,2-diacyl-sn-glycerol + diphosphate. Its pathway is phospholipid metabolism; CDP-diacylglycerol biosynthesis; CDP-diacylglycerol from sn-glycerol 3-phosphate: step 3/3. In terms of biological role, provides CDP-diacylglycerol, an important precursor for the synthesis of phosphatidylinositol (PtdIns). This Caenorhabditis elegans protein is Phosphatidate cytidylyltransferase (cdgs-1).